Consider the following 186-residue polypeptide: UPF0157 protein SCO7215 (186 aa).

Belongs to the UPF0157 (GrpB) family.

The sequence is that of UPF0157 protein SCO7215 from Streptomyces coelicolor (strain ATCC BAA-471 / A3(2) / M145).